A 251-amino-acid chain; its full sequence is Probable transcriptional regulatory protein Cpar_0525 (251 aa).

Belongs to the TACO1 family.

The protein localises to the cytoplasm. This chain is Probable transcriptional regulatory protein Cpar_0525, found in Chlorobaculum parvum (strain DSM 263 / NCIMB 8327) (Chlorobium vibrioforme subsp. thiosulfatophilum).